Consider the following 119-residue polypeptide: Large ribosomal subunit protein uL14 (119 aa).

The protein belongs to the universal ribosomal protein uL14 family. Part of the 50S ribosomal subunit. Forms a cluster with proteins L3 and L19. In the 70S ribosome, L14 and L19 interact and together make contacts with the 16S rRNA in bridges B5 and B8.

In terms of biological role, binds to 23S rRNA. Forms part of two intersubunit bridges in the 70S ribosome. The chain is Large ribosomal subunit protein uL14 from Wolbachia sp. subsp. Brugia malayi (strain TRS).